Reading from the N-terminus, the 112-residue chain is UPF0235 protein RHE_CH03912 (112 aa).

Belongs to the UPF0235 family.

This chain is UPF0235 protein RHE_CH03912, found in Rhizobium etli (strain ATCC 51251 / DSM 11541 / JCM 21823 / NBRC 15573 / CFN 42).